Here is a 342-residue protein sequence, read N- to C-terminus: Anthranilate phosphoribosyltransferase (342 aa).

5-phospho-alpha-D-ribose 1-diphosphate contacts are provided by residues Gly-81, 84 to 85 (GD), 91 to 94 (NVSS), 109 to 117 (KHGNRGVSS), and Ser-121. Residue Gly-81 coordinates anthranilate. A Mg(2+)-binding site is contributed by Ser-93. Asn-112 provides a ligand contact to anthranilate. Arg-167 provides a ligand contact to anthranilate. The Mg(2+) site is built by Asp-226 and Glu-227.

The protein belongs to the anthranilate phosphoribosyltransferase family. As to quaternary structure, homodimer. Mg(2+) is required as a cofactor.

The catalysed reaction is N-(5-phospho-beta-D-ribosyl)anthranilate + diphosphate = 5-phospho-alpha-D-ribose 1-diphosphate + anthranilate. It functions in the pathway amino-acid biosynthesis; L-tryptophan biosynthesis; L-tryptophan from chorismate: step 2/5. Its function is as follows. Catalyzes the transfer of the phosphoribosyl group of 5-phosphorylribose-1-pyrophosphate (PRPP) to anthranilate to yield N-(5'-phosphoribosyl)-anthranilate (PRA). The chain is Anthranilate phosphoribosyltransferase from Marinobacter nauticus (strain ATCC 700491 / DSM 11845 / VT8) (Marinobacter aquaeolei).